Here is a 347-residue protein sequence, read N- to C-terminus: UDP-3-O-acylglucosamine N-acyltransferase 1 (347 aa).

Catalysis depends on H246, which acts as the Proton acceptor.

It belongs to the transferase hexapeptide repeat family. LpxD subfamily. As to quaternary structure, homotrimer.

The catalysed reaction is a UDP-3-O-[(3R)-3-hydroxyacyl]-alpha-D-glucosamine + a (3R)-hydroxyacyl-[ACP] = a UDP-2-N,3-O-bis[(3R)-3-hydroxyacyl]-alpha-D-glucosamine + holo-[ACP] + H(+). The protein operates within bacterial outer membrane biogenesis; LPS lipid A biosynthesis. Its function is as follows. Catalyzes the N-acylation of UDP-3-O-acylglucosamine using 3-hydroxyacyl-ACP as the acyl donor. Is involved in the biosynthesis of lipid A, a phosphorylated glycolipid that anchors the lipopolysaccharide to the outer membrane of the cell. The sequence is that of UDP-3-O-acylglucosamine N-acyltransferase 1 from Francisella tularensis subsp. holarctica (strain LVS).